We begin with the raw amino-acid sequence, 286 residues long: Phosphoribosylaminoimidazole-succinocarboxamide synthase (286 aa).

This sequence belongs to the SAICAR synthetase family.

It catalyses the reaction 5-amino-1-(5-phospho-D-ribosyl)imidazole-4-carboxylate + L-aspartate + ATP = (2S)-2-[5-amino-1-(5-phospho-beta-D-ribosyl)imidazole-4-carboxamido]succinate + ADP + phosphate + 2 H(+). The protein operates within purine metabolism; IMP biosynthesis via de novo pathway; 5-amino-1-(5-phospho-D-ribosyl)imidazole-4-carboxamide from 5-amino-1-(5-phospho-D-ribosyl)imidazole-4-carboxylate: step 1/2. This Mannheimia succiniciproducens (strain KCTC 0769BP / MBEL55E) protein is Phosphoribosylaminoimidazole-succinocarboxamide synthase.